Here is a 151-residue protein sequence, read N- to C-terminus: D-aminoacyl-tRNA deacylase (151 aa).

A Gly-cisPro motif, important for rejection of L-amino acids motif is present at residues 136 to 137 (GP).

It belongs to the DTD family. As to quaternary structure, homodimer.

It is found in the cytoplasm. The enzyme catalyses glycyl-tRNA(Ala) + H2O = tRNA(Ala) + glycine + H(+). The catalysed reaction is a D-aminoacyl-tRNA + H2O = a tRNA + a D-alpha-amino acid + H(+). An aminoacyl-tRNA editing enzyme that deacylates mischarged D-aminoacyl-tRNAs. Also deacylates mischarged glycyl-tRNA(Ala), protecting cells against glycine mischarging by AlaRS. Acts via tRNA-based rather than protein-based catalysis; rejects L-amino acids rather than detecting D-amino acids in the active site. By recycling D-aminoacyl-tRNA to D-amino acids and free tRNA molecules, this enzyme counteracts the toxicity associated with the formation of D-aminoacyl-tRNA entities in vivo and helps enforce protein L-homochirality. This is D-aminoacyl-tRNA deacylase from Lactococcus lactis subsp. lactis (strain IL1403) (Streptococcus lactis).